We begin with the raw amino-acid sequence, 241 residues long: Octanoyltransferase (241 aa).

The 190-residue stretch at 38–227 (AGGPDTLLLL…AVCNALDGAL (190 aa)) folds into the BPL/LPL catalytic domain. Substrate-binding positions include 85–92 (RGGKITWH), 157–159 (AIG), and 170–172 (GFA). Cys-188 (acyl-thioester intermediate) is an active-site residue.

It belongs to the LipB family.

It localises to the cytoplasm. The enzyme catalyses octanoyl-[ACP] + L-lysyl-[protein] = N(6)-octanoyl-L-lysyl-[protein] + holo-[ACP] + H(+). It participates in protein modification; protein lipoylation via endogenous pathway; protein N(6)-(lipoyl)lysine from octanoyl-[acyl-carrier-protein]: step 1/2. In terms of biological role, catalyzes the transfer of endogenously produced octanoic acid from octanoyl-acyl-carrier-protein onto the lipoyl domains of lipoate-dependent enzymes. Lipoyl-ACP can also act as a substrate although octanoyl-ACP is likely to be the physiological substrate. The sequence is that of Octanoyltransferase from Mycobacterium marinum (strain ATCC BAA-535 / M).